A 283-amino-acid polypeptide reads, in one-letter code: Undecaprenyl-diphosphatase (283 aa).

7 consecutive transmembrane segments (helical) span residues 40–60 (GAAFTAIVQIGTLAAVLIYFF), 85–105 (AKMGWMIAAGTIPIVIFGLLF), 113–133 (LRSLYWISGALIGLALLLTIA), 153–173 (IGWKDALLIGLIQSIALIPGS), 193–213 (AARFSFLLSLPSVLAAGVFQL), 227–247 (LIAIIVATIVSGIVGYASIAF), and 259–279 (VFIIYRLLLGSGILLMLATGM).

Belongs to the UppP family.

It is found in the cell inner membrane. It catalyses the reaction di-trans,octa-cis-undecaprenyl diphosphate + H2O = di-trans,octa-cis-undecaprenyl phosphate + phosphate + H(+). Catalyzes the dephosphorylation of undecaprenyl diphosphate (UPP). Confers resistance to bacitracin. This chain is Undecaprenyl-diphosphatase, found in Chlorobium limicola (strain DSM 245 / NBRC 103803 / 6330).